We begin with the raw amino-acid sequence, 500 residues long: Hepatic triacylglycerol lipase (500 aa).

An N-terminal signal peptide occupies residues 1–21 (MENPLCVSIFLFYCILIQSSA). A disordered region spans residues 23-44 (GQSLGPESFGRRSRAAETNKTP). N-linked (GlcNAc...) asparagine glycosylation is found at N67 and N78. S168 functions as the Nucleophile in the catalytic mechanism. Catalysis depends on D194, which acts as the Charge relay system. An essential for determining substrate specificity region spans residues 254 to 277 (CHFLELYKHFAKHGLNAITRTVKC). The active-site Charge relay system is H279. Positions 353-487 (YHYQFKIRFI…HPAREKTFVR (135 aa)) constitute a PLAT domain. N-linked (GlcNAc...) asparagine glycans are attached at residues N363 and N398.

This sequence belongs to the AB hydrolase superfamily. Lipase family. In terms of assembly, homodimer.

Its subcellular location is the secreted. The enzyme catalyses a triacylglycerol + H2O = a diacylglycerol + a fatty acid + H(+). It catalyses the reaction a 1-acyl-sn-glycero-3-phosphocholine + H2O = sn-glycerol 3-phosphocholine + a fatty acid + H(+). It carries out the reaction a 1,2-diacyl-sn-glycero-3-phosphocholine + H2O = a 2-acyl-sn-glycero-3-phosphocholine + a fatty acid + H(+). The catalysed reaction is 1,2,3-tri-(9Z-octadecenoyl)-glycerol + H2O = di-(9Z)-octadecenoylglycerol + (9Z)-octadecenoate + H(+). The enzyme catalyses 1,2-di-(9Z-octadecenoyl)-sn-glycero-3-phosphocholine + H2O = (9Z-octadecenoyl)-sn-glycero-3-phosphocholine + (9Z)-octadecenoate + H(+). It catalyses the reaction 1,2,3-tributanoylglycerol + H2O = dibutanoylglycerol + butanoate + H(+). It carries out the reaction 1,2-dihexadecanoyl-sn-glycero-3-phosphocholine + H2O = hexadecanoyl-sn-glycero-3-phosphocholine + hexadecanoate + H(+). The catalysed reaction is 1,2-di-(9Z-octadecenoyl)-sn-glycerol + H2O = 2-(9Z-octadecenoyl)-glycerol + (9Z)-octadecenoate + H(+). The enzyme catalyses 1,2,3-tri-(9Z-octadecenoyl)-glycerol + H2O = 2,3-di-(9Z)-octadecenoyl-sn-glycerol + (9Z)-octadecenoate + H(+). It catalyses the reaction 1-(9Z-octadecenoyl)-sn-glycero-3-phospho-L-serine + H2O = sn-glycero-3-phospho-L-serine + (9Z)-octadecenoate + H(+). It carries out the reaction 1-hexadecanoyl-sn-glycero-3-phosphocholine + H2O = sn-glycerol 3-phosphocholine + hexadecanoate + H(+). The catalysed reaction is 1,3-di-(9Z-octadecenoyl)-glycerol + H2O = 3-(9Z-octadecenoyl)-sn-glycerol + (9Z)-octadecenoate + H(+). In terms of biological role, catalyzes the hydrolysis of triglycerides and phospholipids present in circulating plasma lipoproteins, including chylomicrons, intermediate density lipoproteins (IDL), low density lipoproteins (LDL) of large size and high density lipoproteins (HDL), releasing free fatty acids (FFA) and smaller lipoprotein particles. Also exhibits lysophospholipase activity. Can hydrolyze both neutral lipid and phospholipid substrates but shows a greater binding affinity for neutral lipid substrates than phospholipid substrates. In native LDL, preferentially hydrolyzes the phosphatidylcholine species containing polyunsaturated fatty acids at sn-2 position. The protein is Hepatic triacylglycerol lipase (LIPC) of Bos taurus (Bovine).